Reading from the N-terminus, the 482-residue chain is Cytochrome c-552 (482 aa).

Positions 1–26 (MIKVSNALQRILIGAALALFGGGAQA) are cleaved as a signal peptide. Residue His98 participates in heme c binding. Heme contacts are provided by Cys126, Cys129, and Lys130. Residues Cys164, Cys167, His168, Cys213, Cys216, and His217 each coordinate heme c. Residues Glu219, Tyr220, Lys265, and Gln267 each coordinate Ca(2+). Residue Tyr220 participates in substrate binding. Residue His268 coordinates substrate. His279, Cys286, Cys289, His290, His305, Cys318, Cys321, His322, and His397 together coordinate heme c.

Belongs to the cytochrome c-552 family. Ca(2+) serves as cofactor. The cofactor is heme c.

It is found in the periplasm. It carries out the reaction 6 Fe(III)-[cytochrome c] + NH4(+) + 2 H2O = 6 Fe(II)-[cytochrome c] + nitrite + 8 H(+). Its pathway is nitrogen metabolism; nitrate reduction (assimilation). In terms of biological role, catalyzes the reduction of nitrite to ammonia, consuming six electrons in the process. The chain is Cytochrome c-552 from Edwardsiella ictaluri (strain 93-146).